The chain runs to 741 residues: Protein lin-54 homolog (741 aa).

The CRC domain occupies 513–626 (PRKPCNCTKS…KCIGCKNFEE (114 aa)). The DNA-binding stretch occupies residues 515–528 (KPCNCTKSLCLKLY). Zn(2+) is bound by residues cysteine 517, cysteine 519, cysteine 524, cysteine 529, cysteine 531, cysteine 538, cysteine 541, cysteine 543, and cysteine 546. Positions 575 to 588 (IGKGKEGESDRRHS) are linker. Zn(2+)-binding residues include cysteine 591, cysteine 593, cysteine 598, cysteine 603, cysteine 605, cysteine 612, cysteine 616, cysteine 618, and cysteine 621. Residues 591–604 (CNCKRSGCLKNYCE) form a DNA-binding region.

It belongs to the lin-54 family. In terms of assembly, component of the DREAM complex.

The protein localises to the nucleus. Component of the DREAM complex, a multiprotein complex that can both act as a transcription activator or repressor depending on the context. Specifically recognizes the consensus motif 5'-TTYRAA-3' in target DNA. This chain is Protein lin-54 homolog (lin54), found in Xenopus tropicalis (Western clawed frog).